We begin with the raw amino-acid sequence, 937 residues long: DNA mismatch repair protein msh-2 (937 aa).

659–666 (GPNMGGKS) is a binding site for ATP.

The protein belongs to the DNA mismatch repair MutS family. In terms of assembly, heterodimer of msh2 and msh6.

The protein localises to the nucleus. Functionally, involved in post-replicative DNA-mismatch repair. Binds to mismatch-containing DNA. This is DNA mismatch repair protein msh-2 (msh-2) from Neurospora crassa (strain ATCC 24698 / 74-OR23-1A / CBS 708.71 / DSM 1257 / FGSC 987).